A 187-amino-acid polypeptide reads, in one-letter code: Peptidyl-tRNA hydrolase (187 aa).

A tRNA-binding site is contributed by tyrosine 14. The active-site Proton acceptor is histidine 19. TRNA is bound by residues phenylalanine 60 and asparagine 62.

Belongs to the PTH family. As to quaternary structure, monomer.

It localises to the cytoplasm. The enzyme catalyses an N-acyl-L-alpha-aminoacyl-tRNA + H2O = an N-acyl-L-amino acid + a tRNA + H(+). Functionally, hydrolyzes ribosome-free peptidyl-tRNAs (with 1 or more amino acids incorporated), which drop off the ribosome during protein synthesis, or as a result of ribosome stalling. In terms of biological role, catalyzes the release of premature peptidyl moieties from peptidyl-tRNA molecules trapped in stalled 50S ribosomal subunits, and thus maintains levels of free tRNAs and 50S ribosomes. The protein is Peptidyl-tRNA hydrolase of Pseudothermotoga lettingae (strain ATCC BAA-301 / DSM 14385 / NBRC 107922 / TMO) (Thermotoga lettingae).